The following is a 148-amino-acid chain: Large ribosomal subunit protein bL9 (148 aa).

Belongs to the bacterial ribosomal protein bL9 family.

Its function is as follows. Binds to the 23S rRNA. The sequence is that of Large ribosomal subunit protein bL9 from Pseudomonas fluorescens (strain SBW25).